The sequence spans 42 residues: uncharacterized protein (42 aa).

This is an uncharacterized protein from Treponema pallidum (strain Nichols).